The sequence spans 463 residues: Sialic acid-binding Ig-like lectin 9 (463 aa).

The N-terminal stretch at 1-17 is a signal peptide; that stretch reads MLLLLLPLLWGRERAEG. The Extracellular segment spans residues 18 to 348; the sequence is QTSKLLTMQS…SKATSGVTQG (331 aa). The region spanning 20–140 is the Ig-like V-type domain; sequence SKLLTMQSSV…KHHRLSVNVT (121 aa). Disulfide bonds link cysteine 36-cysteine 170, cysteine 41-cysteine 102, and cysteine 164-cysteine 213. The N-linked (GlcNAc...) asparagine glycan is linked to asparagine 101. Arginine 120 is an N-acetylneuraminate binding site. N-linked (GlcNAc...) asparagine glycans are attached at residues asparagine 138 and asparagine 161. One can recognise an Ig-like C2-type 1 domain in the interval 146-229; that stretch reads PNILIPGTLE…ASVTTNKTVH (84 aa). 4 N-linked (GlcNAc...) asparagine glycosylation sites follow: asparagine 225, asparagine 231, asparagine 238, and asparagine 256. Residues 236 to 336 enclose the Ig-like C2-type 2 domain; the sequence is PQNLTMTVFQ…GSQQVYLNVS (101 aa). A disulfide bond links cysteine 272 and cysteine 320. An N-linked (GlcNAc...) asparagine glycan is attached at asparagine 334. Residues 349–369 traverse the membrane as a helical segment; that stretch reads VVGGAGATALVFLSFCVIFVV. Residues 370 to 463 are Cytoplasmic-facing; the sequence is VRSCRKKSAR…TEYSEIKIHR (94 aa). The interval 380–428 is disordered; sequence PAAGVGDTGIEDANAVRGSASQGPLTEPWAEDSPPDQPPPASARSSVGE. The ITIM motif signature appears at 431 to 436; sequence LQYASL. Positions 444 to 463 are disordered; that stretch reads WDSRGQEATDTEYSEIKIHR. Residues 454 to 459 carry the SLAM-like motif motif; it reads TEYSEI.

This sequence belongs to the immunoglobulin superfamily. SIGLEC (sialic acid binding Ig-like lectin) family. As to expression, expressed by peripheral blood leukocytes (neutrophils and monocytes but not eosinophils). Found in liver, fetal liver, bone marrow, placenta, spleen and in lower levels in skeletal muscle, fetal brain, stomach, lung, thymus, prostate, brain, mammary, adrenal gland, colon, trachea, cerebellum, testis, small intestine and spinal cordon.

The protein resides in the membrane. Functionally, putative adhesion molecule that mediates sialic-acid dependent binding to cells. Preferentially binds to alpha-2,3- or alpha-2,6-linked sialic acid. The sialic acid recognition site may be masked by cis interactions with sialic acids on the same cell surface. The sequence is that of Sialic acid-binding Ig-like lectin 9 (SIGLEC9) from Homo sapiens (Human).